The following is a 313-amino-acid chain: Ribosomal RNA small subunit methyltransferase H (313 aa).

S-adenosyl-L-methionine is bound by residues 35–37, Asp-55, Phe-79, Asp-101, and Gln-108; that span reads GGH.

The protein belongs to the methyltransferase superfamily. RsmH family.

It localises to the cytoplasm. It catalyses the reaction cytidine(1402) in 16S rRNA + S-adenosyl-L-methionine = N(4)-methylcytidine(1402) in 16S rRNA + S-adenosyl-L-homocysteine + H(+). Functionally, specifically methylates the N4 position of cytidine in position 1402 (C1402) of 16S rRNA. The chain is Ribosomal RNA small subunit methyltransferase H from Klebsiella pneumoniae (strain 342).